Here is a 761-residue protein sequence, read N- to C-terminus: Coenzyme PQQ synthesis protein F (761 aa).

His49 is a Zn(2+) binding site. Glu52 functions as the Proton acceptor in the catalytic mechanism. His53 and Glu130 together coordinate Zn(2+).

It belongs to the peptidase M16 family. Requires Zn(2+) as cofactor.

Its pathway is cofactor biosynthesis; pyrroloquinoline quinone biosynthesis. In terms of biological role, required for coenzyme pyrroloquinoline quinone (PQQ) biosynthesis. It is thought that this protein is a protease that cleaves peptides bond in a small peptide (gene pqqA), providing the glutamate and tyrosine residues which are necessary for the synthesis of PQQ. This Klebsiella pneumoniae protein is Coenzyme PQQ synthesis protein F (pqqF).